A 252-amino-acid chain; its full sequence is Ubiquinone biosynthesis O-methyltransferase (252 aa).

S-adenosyl-L-methionine-binding residues include Arg51, Gly70, Asp91, and Met136.

This sequence belongs to the methyltransferase superfamily. UbiG/COQ3 family.

It carries out the reaction a 3-demethylubiquinol + S-adenosyl-L-methionine = a ubiquinol + S-adenosyl-L-homocysteine + H(+). The enzyme catalyses a 3-(all-trans-polyprenyl)benzene-1,2-diol + S-adenosyl-L-methionine = a 2-methoxy-6-(all-trans-polyprenyl)phenol + S-adenosyl-L-homocysteine + H(+). The protein operates within cofactor biosynthesis; ubiquinone biosynthesis. Functionally, O-methyltransferase that catalyzes the 2 O-methylation steps in the ubiquinone biosynthetic pathway. The polypeptide is Ubiquinone biosynthesis O-methyltransferase (Albidiferax ferrireducens (strain ATCC BAA-621 / DSM 15236 / T118) (Rhodoferax ferrireducens)).